The primary structure comprises 493 residues: Cytochrome c-552 (493 aa).

The first 25 residues, 1–25 (MEKKLKSWQGWLLFCGAMAVVFVLG), serve as a signal peptide directing secretion. Position 116 (His116) interacts with heme c. 3 residues coordinate heme: Cys144, Cys147, and Lys148. Heme c is bound by residues Cys182, Cys185, His186, Cys224, Cys227, and His228. Glu230, Tyr231, Lys276, and Gln278 together coordinate Ca(2+). Position 231 (Tyr231) interacts with substrate. His279 is a binding site for substrate. His290, Cys297, Cys300, His301, His315, Cys328, Cys331, His332, and His407 together coordinate heme c.

Belongs to the cytochrome c-552 family. The cofactor is Ca(2+). Heme c is required as a cofactor.

The protein resides in the periplasm. It catalyses the reaction 6 Fe(III)-[cytochrome c] + NH4(+) + 2 H2O = 6 Fe(II)-[cytochrome c] + nitrite + 8 H(+). Its pathway is nitrogen metabolism; nitrate reduction (assimilation). Functionally, catalyzes the reduction of nitrite to ammonia, consuming six electrons in the process. The chain is Cytochrome c-552 from Bacteroides fragilis (strain YCH46).